The following is a 236-amino-acid chain: Small ribosomal subunit protein eS6 (236 aa).

Belongs to the eukaryotic ribosomal protein eS6 family. As to quaternary structure, component of the small ribosomal subunit. Part of the small subunit (SSU) processome, composed of more than 70 proteins and the RNA chaperone small nucleolar RNA (snoRNA) U3. In terms of processing, ribosomal protein S6 is the major substrate of protein kinases in eukaryote ribosomes.

It localises to the cytoplasm. The protein localises to the nucleus. It is found in the nucleolus. Component of the 40S small ribosomal subunit. Plays an important role in controlling cell growth and proliferation through the selective translation of particular classes of mRNA. Part of the small subunit (SSU) processome, first precursor of the small eukaryotic ribosomal subunit. During the assembly of the SSU processome in the nucleolus, many ribosome biogenesis factors, an RNA chaperone and ribosomal proteins associate with the nascent pre-rRNA and work in concert to generate RNA folding, modifications, rearrangements and cleavage as well as targeted degradation of pre-ribosomal RNA by the RNA exosome. This chain is Small ribosomal subunit protein eS6 (rps6), found in Dictyostelium discoideum (Social amoeba).